Reading from the N-terminus, the 725-residue chain is 1,4-alpha-glucan branching enzyme GlgB (725 aa).

D403 serves as the catalytic Nucleophile. The Proton donor role is filled by E456.

Belongs to the glycosyl hydrolase 13 family. GlgB subfamily. As to quaternary structure, monomer.

It catalyses the reaction Transfers a segment of a (1-&gt;4)-alpha-D-glucan chain to a primary hydroxy group in a similar glucan chain.. It participates in glycan biosynthesis; glycogen biosynthesis. Functionally, catalyzes the formation of the alpha-1,6-glucosidic linkages in glycogen by scission of a 1,4-alpha-linked oligosaccharide from growing alpha-1,4-glucan chains and the subsequent attachment of the oligosaccharide to the alpha-1,6 position. The polypeptide is 1,4-alpha-glucan branching enzyme GlgB (Pectobacterium atrosepticum (strain SCRI 1043 / ATCC BAA-672) (Erwinia carotovora subsp. atroseptica)).